A 346-amino-acid chain; its full sequence is 3-dehydroquinate synthase (346 aa).

NAD(+) is bound by residues Asp61–Lys66, Gly95–Asp99, Thr119–Thr120, Lys132, and Lys141. Zn(2+)-binding residues include Glu174, His233, and His250.

It belongs to the sugar phosphate cyclases superfamily. Dehydroquinate synthase family. The cofactor is NAD(+). Requires Co(2+) as cofactor. Zn(2+) is required as a cofactor.

It localises to the cytoplasm. It catalyses the reaction 7-phospho-2-dehydro-3-deoxy-D-arabino-heptonate = 3-dehydroquinate + phosphate. It participates in metabolic intermediate biosynthesis; chorismate biosynthesis; chorismate from D-erythrose 4-phosphate and phosphoenolpyruvate: step 2/7. Catalyzes the conversion of 3-deoxy-D-arabino-heptulosonate 7-phosphate (DAHP) to dehydroquinate (DHQ). In Wolinella succinogenes (strain ATCC 29543 / DSM 1740 / CCUG 13145 / JCM 31913 / LMG 7466 / NCTC 11488 / FDC 602W) (Vibrio succinogenes), this protein is 3-dehydroquinate synthase.